The following is a 117-amino-acid chain: Large ribosomal subunit protein uL18 (117 aa).

The protein belongs to the universal ribosomal protein uL18 family. In terms of assembly, part of the 50S ribosomal subunit; part of the 5S rRNA/L5/L18/L25 subcomplex. Contacts the 5S and 23S rRNAs.

Functionally, this is one of the proteins that bind and probably mediate the attachment of the 5S RNA into the large ribosomal subunit, where it forms part of the central protuberance. This Yersinia pseudotuberculosis serotype O:1b (strain IP 31758) protein is Large ribosomal subunit protein uL18.